The chain runs to 245 residues: 3-dehydroquinate dehydratase (245 aa).

3-dehydroquinate contacts are provided by residues 35-37 (EFR) and Arg-70. The active-site Proton donor/acceptor is the His-132. The active-site Schiff-base intermediate with substrate is Lys-158. The 3-dehydroquinate site is built by Arg-199, Thr-220, and Gln-224.

The protein belongs to the type-I 3-dehydroquinase family. Homodimer.

It carries out the reaction 3-dehydroquinate = 3-dehydroshikimate + H2O. It functions in the pathway metabolic intermediate biosynthesis; chorismate biosynthesis; chorismate from D-erythrose 4-phosphate and phosphoenolpyruvate: step 3/7. Involved in the third step of the chorismate pathway, which leads to the biosynthesis of aromatic amino acids. Catalyzes the cis-dehydration of 3-dehydroquinate (DHQ) and introduces the first double bond of the aromatic ring to yield 3-dehydroshikimate. This Haloquadratum walsbyi (strain DSM 16790 / HBSQ001) protein is 3-dehydroquinate dehydratase.